We begin with the raw amino-acid sequence, 363 residues long: Peptide chain release factor 2 (363 aa).

Gln251 carries the N5-methylglutamine modification.

It belongs to the prokaryotic/mitochondrial release factor family. Post-translationally, methylated by PrmC. Methylation increases the termination efficiency of RF2.

The protein resides in the cytoplasm. Peptide chain release factor 2 directs the termination of translation in response to the peptide chain termination codons UGA and UAA. The polypeptide is Peptide chain release factor 2 (prfB) (Helicobacter pylori (strain J99 / ATCC 700824) (Campylobacter pylori J99)).